A 347-amino-acid polypeptide reads, in one-letter code: Probable dual-specificity RNA methyltransferase RlmN (347 aa).

The Proton acceptor role is filled by Glu-94. In terms of domain architecture, Radical SAM core spans Tyr-100–Asp-319. An intrachain disulfide couples Cys-107 to Cys-334. Residues Cys-114, Cys-118, and Cys-121 each contribute to the [4Fe-4S] cluster site. Residues Gly-161 to Glu-162, Ser-193, Ser-216 to His-218, and Asn-292 each bind S-adenosyl-L-methionine. Cys-334 (S-methylcysteine intermediate) is an active-site residue.

Belongs to the radical SAM superfamily. RlmN family. [4Fe-4S] cluster is required as a cofactor.

It is found in the cytoplasm. The enzyme catalyses adenosine(2503) in 23S rRNA + 2 reduced [2Fe-2S]-[ferredoxin] + 2 S-adenosyl-L-methionine = 2-methyladenosine(2503) in 23S rRNA + 5'-deoxyadenosine + L-methionine + 2 oxidized [2Fe-2S]-[ferredoxin] + S-adenosyl-L-homocysteine. It carries out the reaction adenosine(37) in tRNA + 2 reduced [2Fe-2S]-[ferredoxin] + 2 S-adenosyl-L-methionine = 2-methyladenosine(37) in tRNA + 5'-deoxyadenosine + L-methionine + 2 oxidized [2Fe-2S]-[ferredoxin] + S-adenosyl-L-homocysteine. Specifically methylates position 2 of adenine 2503 in 23S rRNA and position 2 of adenine 37 in tRNAs. This Petrotoga mobilis (strain DSM 10674 / SJ95) protein is Probable dual-specificity RNA methyltransferase RlmN.